Consider the following 69-residue polypeptide: Small ribosomal subunit protein bS21 (69 aa).

This sequence belongs to the bacterial ribosomal protein bS21 family.

The polypeptide is Small ribosomal subunit protein bS21 (Borrelia duttonii (strain Ly)).